Here is a 318-residue protein sequence, read N- to C-terminus: MTLSLIIKWGGQEFPLSALSEEDTVLDLKHSLKSLTGVLPERMKLLGLKYKGKPAENDVKLGVLKLKPNTKIMMMGTREESLEEMMAPPPENDEVVNDFDIEEEVVEVENREENLAKISRRVKDYKIEILNPPREGKKLLVLDVDYTLFDHRSCAETGQELMRPYLHEFLTSAYEDYDIVIWSATSMKWIEAKMKELGVSTNSNYKITFMLDSAAMITVHTPRRGLVDVKPLGVIWGKYGEFYNKNNTIMFDDIGRNFLMNPQNGLKIRPFMKAHLNRDKDKELLKLSQYLKEIAQLDDLSELNHKHWERYLVKKQGQ.

The region spanning Leu-3–Ser-81 is the Ubiquitin-like domain. The region spanning Pro-133 to Ile-294 is the FCP1 homology domain. Positions 143, 145, and 253 each coordinate Mg(2+).

It depends on Mg(2+) as a cofactor.

The protein resides in the nucleus. It catalyses the reaction O-phospho-L-seryl-[protein] + H2O = L-seryl-[protein] + phosphate. It carries out the reaction O-phospho-L-threonyl-[protein] + H2O = L-threonyl-[protein] + phosphate. In terms of biological role, dephosphorylates 26S nuclear proteasomes, thereby decreasing their proteolytic activity. Recruited to the 19S regulatory particle of the 26S proteasome where it dephosphorylates 19S component psmc2 which impairs psmc2 ATPase activity and disrupts 26S proteasome assembly. Has also been reported to stimulate the proteolytic activity of the 26S proteasome. In Xenopus tropicalis (Western clawed frog), this protein is Ubiquitin-like domain-containing CTD phosphatase 1 (ublcp1).